The primary structure comprises 284 residues: Tropomyosin (284 aa).

Residues 1-284 (MDAIKKKMQA…DQTFAEIAGY (284 aa)) adopt a coiled-coil conformation. Positions 103–133 (EEKLATTTEKLEEASKAADESERNRKVLEGR) are disordered.

This sequence belongs to the tropomyosin family. In terms of assembly, homodimer.

Tropomyosin, in association with the troponin complex, plays a central role in the calcium dependent regulation of muscle contraction. The sequence is that of Tropomyosin from Chlamys nipponensis akazara (Akazara scallop).